The sequence spans 294 residues: 3-methyl-2-oxobutanoate hydroxymethyltransferase (294 aa).

Residues 1 to 12 show a composition bias toward polar residues; the sequence is MSASAESTNATP. Residues 1 to 21 are disordered; the sequence is MSASAESTNATPYGTLPPTAA. D69 and D112 together coordinate Mg(2+). 3-methyl-2-oxobutanoate is bound by residues 69-70, D112, and K141; that span reads DS. Position 143 (E143) interacts with Mg(2+). The active-site Proton acceptor is E210.

It belongs to the PanB family. In terms of assembly, homodecamer; pentamer of dimers. The cofactor is Mg(2+).

Its subcellular location is the cytoplasm. The catalysed reaction is 3-methyl-2-oxobutanoate + (6R)-5,10-methylene-5,6,7,8-tetrahydrofolate + H2O = 2-dehydropantoate + (6S)-5,6,7,8-tetrahydrofolate. It functions in the pathway cofactor biosynthesis; (R)-pantothenate biosynthesis; (R)-pantoate from 3-methyl-2-oxobutanoate: step 1/2. In terms of biological role, catalyzes the reversible reaction in which hydroxymethyl group from 5,10-methylenetetrahydrofolate is transferred onto alpha-ketoisovalerate to form ketopantoate. The protein is 3-methyl-2-oxobutanoate hydroxymethyltransferase of Albidiferax ferrireducens (strain ATCC BAA-621 / DSM 15236 / T118) (Rhodoferax ferrireducens).